A 400-amino-acid chain; its full sequence is Tektin-B1 (400 aa).

Coiled coils occupy residues 35–81, 236–294, and 310–353; these read TRLS…AKAL, FALR…LENR, and GLVN…LELK.

It belongs to the tektin family. As to quaternary structure, may form a heterodimer with tektin a or exist as a homodimer. In terms of tissue distribution, cilia and flagella.

It localises to the cytoplasm. The protein resides in the cytoskeleton. Its function is as follows. Structural component of ciliary and flagellar microtubules. This chain is Tektin-B1, found in Strongylocentrotus purpuratus (Purple sea urchin).